We begin with the raw amino-acid sequence, 432 residues long: Serine--tRNA ligase (432 aa).

L-serine is bound at residue 235 to 237 (TSE). 266-268 (RSE) is a binding site for ATP. Glutamate 289 contributes to the L-serine binding site. 353–356 (EISS) is a binding site for ATP. Position 388 (serine 388) interacts with L-serine.

It belongs to the class-II aminoacyl-tRNA synthetase family. Type-1 seryl-tRNA synthetase subfamily. Homodimer. The tRNA molecule binds across the dimer.

It localises to the cytoplasm. It catalyses the reaction tRNA(Ser) + L-serine + ATP = L-seryl-tRNA(Ser) + AMP + diphosphate + H(+). It carries out the reaction tRNA(Sec) + L-serine + ATP = L-seryl-tRNA(Sec) + AMP + diphosphate + H(+). It participates in aminoacyl-tRNA biosynthesis; selenocysteinyl-tRNA(Sec) biosynthesis; L-seryl-tRNA(Sec) from L-serine and tRNA(Sec): step 1/1. In terms of biological role, catalyzes the attachment of serine to tRNA(Ser). Is also able to aminoacylate tRNA(Sec) with serine, to form the misacylated tRNA L-seryl-tRNA(Sec), which will be further converted into selenocysteinyl-tRNA(Sec). In Paraburkholderia phymatum (strain DSM 17167 / CIP 108236 / LMG 21445 / STM815) (Burkholderia phymatum), this protein is Serine--tRNA ligase.